The primary structure comprises 416 residues: Multifunctional CCA protein (416 aa).

ATP-binding residues include glycine 8 and arginine 11. The CTP site is built by glycine 8 and arginine 11. Residues aspartate 21 and aspartate 23 each coordinate Mg(2+). Positions 91, 138, and 141 each coordinate ATP. Positions 91, 138, and 141 each coordinate CTP. The HD domain maps to 229–331 (TGLHQELVSD…YELLQRCDAF (103 aa)).

This sequence belongs to the tRNA nucleotidyltransferase/poly(A) polymerase family. Bacterial CCA-adding enzyme type 1 subfamily. Monomer. Can also form homodimers and oligomers. Mg(2+) serves as cofactor. The cofactor is Ni(2+).

The enzyme catalyses a tRNA precursor + 2 CTP + ATP = a tRNA with a 3' CCA end + 3 diphosphate. It catalyses the reaction a tRNA with a 3' CCA end + 2 CTP + ATP = a tRNA with a 3' CCACCA end + 3 diphosphate. In terms of biological role, catalyzes the addition and repair of the essential 3'-terminal CCA sequence in tRNAs without using a nucleic acid template. Adds these three nucleotides in the order of C, C, and A to the tRNA nucleotide-73, using CTP and ATP as substrates and producing inorganic pyrophosphate. tRNA 3'-terminal CCA addition is required both for tRNA processing and repair. Also involved in tRNA surveillance by mediating tandem CCA addition to generate a CCACCA at the 3' terminus of unstable tRNAs. While stable tRNAs receive only 3'-terminal CCA, unstable tRNAs are marked with CCACCA and rapidly degraded. This is Multifunctional CCA protein from Xylella fastidiosa (strain 9a5c).